The primary structure comprises 382 residues: Mannitol-1-phosphate 5-dehydrogenase (382 aa).

4 to 15 contributes to the NAD(+) binding site; the sequence is AVHFGAGNIGRG.

The protein belongs to the mannitol dehydrogenase family.

It carries out the reaction D-mannitol 1-phosphate + NAD(+) = beta-D-fructose 6-phosphate + NADH + H(+). The polypeptide is Mannitol-1-phosphate 5-dehydrogenase (Vibrio vulnificus (strain YJ016)).